Consider the following 1379-residue polypeptide: DNA-directed RNA polymerase subunit beta'' (1379 aa).

Zn(2+) contacts are provided by C220, C293, C300, and C303.

Belongs to the RNA polymerase beta' chain family. RpoC2 subfamily. As to quaternary structure, in plastids the minimal PEP RNA polymerase catalytic core is composed of four subunits: alpha, beta, beta', and beta''. When a (nuclear-encoded) sigma factor is associated with the core the holoenzyme is formed, which can initiate transcription. Zn(2+) is required as a cofactor.

The protein resides in the plastid. It is found in the chloroplast. It catalyses the reaction RNA(n) + a ribonucleoside 5'-triphosphate = RNA(n+1) + diphosphate. Its function is as follows. DNA-dependent RNA polymerase catalyzes the transcription of DNA into RNA using the four ribonucleoside triphosphates as substrates. This chain is DNA-directed RNA polymerase subunit beta'', found in Capsella bursa-pastoris (Shepherd's purse).